The sequence spans 218 residues: Capsid protein (218 aa).

Methionine 1 bears the N-acetylmethionine; by host mark. Residues 1–10 (MDKSESTSAG) show a composition bias toward low complexity. Positions 1–30 (MDKSESTSAGRNRRRRLRRGSRSASSSSDA) are disordered. A compositionally biased stretch (basic residues) spans 11 to 21 (RNRRRRLRRGS).

It belongs to the cucumovirus capsid protein family.

The protein resides in the virion. Capsid protein. Probably binds RNA and plays a role in packaging. The chain is Capsid protein from Cucumber mosaic virus (strain Y) (CMV).